The chain runs to 185 residues: Ribosome-recycling factor (185 aa).

Belongs to the RRF family.

The protein localises to the cytoplasm. Its function is as follows. Responsible for the release of ribosomes from messenger RNA at the termination of protein biosynthesis. May increase the efficiency of translation by recycling ribosomes from one round of translation to another. In Actinobacillus succinogenes (strain ATCC 55618 / DSM 22257 / CCUG 43843 / 130Z), this protein is Ribosome-recycling factor.